Reading from the N-terminus, the 275-residue chain is Light-independent protochlorophyllide reductase iron-sulfur ATP-binding protein (275 aa).

ATP contacts are provided by residues 12-17 (GIGKST) and K41. S16 serves as a coordination point for Mg(2+). [4Fe-4S] cluster is bound by residues C97 and C131. Residue 182–183 (NR) coordinates ATP.

Belongs to the NifH/BchL/ChlL family. As to quaternary structure, homodimer. Protochlorophyllide reductase is composed of three subunits; BchL, BchN and BchB. Requires [4Fe-4S] cluster as cofactor.

It catalyses the reaction chlorophyllide a + oxidized 2[4Fe-4S]-[ferredoxin] + 2 ADP + 2 phosphate = protochlorophyllide a + reduced 2[4Fe-4S]-[ferredoxin] + 2 ATP + 2 H2O. Its pathway is porphyrin-containing compound metabolism; bacteriochlorophyll biosynthesis (light-independent). Component of the dark-operative protochlorophyllide reductase (DPOR) that uses Mg-ATP and reduced ferredoxin to reduce ring D of protochlorophyllide (Pchlide) to form chlorophyllide a (Chlide). This reaction is light-independent. The L component serves as a unique electron donor to the NB-component of the complex, and binds Mg-ATP. This chain is Light-independent protochlorophyllide reductase iron-sulfur ATP-binding protein, found in Prosthecochloris aestuarii (strain DSM 271 / SK 413).